Reading from the N-terminus, the 239-residue chain is Cytochrome c oxidase subunit 2 (239 aa).

The Mitochondrial intermembrane portion of the chain corresponds to 1-26; it reads MATPAQLGLMDAASPVMEEMIYFHDH. Residues 27-48 traverse the membrane as a helical segment; the sequence is VMLVLILITCLIFYSMLVLISS. Residues 49–62 lie on the Mitochondrial matrix side of the membrane; that stretch reads KYIYRFLTDGHVIE. Residues 63-82 form a helical membrane-spanning segment; sequence TVWTVIPAIILVVVALPSLK. Topologically, residues 83–239 are mitochondrial intermembrane; the sequence is LLYLTDELDN…ESLGSLNMKR (157 aa). Cu cation contacts are provided by histidine 161, cysteine 196, glutamate 198, cysteine 200, histidine 204, and methionine 207. A Mg(2+)-binding site is contributed by glutamate 198.

The protein belongs to the cytochrome c oxidase subunit 2 family. Component of the cytochrome c oxidase (complex IV, CIV), a multisubunit enzyme composed of a catalytic core of 3 subunits and several supernumerary subunits. The complex exists as a monomer or a dimer and forms supercomplexes (SCs) in the inner mitochondrial membrane with ubiquinol-cytochrome c oxidoreductase (cytochrome b-c1 complex, complex III, CIII). The cofactor is Cu cation.

It is found in the mitochondrion inner membrane. It catalyses the reaction 4 Fe(II)-[cytochrome c] + O2 + 8 H(+)(in) = 4 Fe(III)-[cytochrome c] + 2 H2O + 4 H(+)(out). Functionally, component of the cytochrome c oxidase, the last enzyme in the mitochondrial electron transport chain which drives oxidative phosphorylation. The respiratory chain contains 3 multisubunit complexes succinate dehydrogenase (complex II, CII), ubiquinol-cytochrome c oxidoreductase (cytochrome b-c1 complex, complex III, CIII) and cytochrome c oxidase (complex IV, CIV), that cooperate to transfer electrons derived from NADH and succinate to molecular oxygen, creating an electrochemical gradient over the inner membrane that drives transmembrane transport and the ATP synthase. Cytochrome c oxidase is the component of the respiratory chain that catalyzes the reduction of oxygen to water. Electrons originating from reduced cytochrome c in the intermembrane space (IMS) are transferred via the dinuclear copper A center (CU(A)) of subunit 2 and heme A of subunit 1 to the active site in subunit 1, a binuclear center (BNC) formed by heme A3 and copper B (CU(B)). The BNC reduces molecular oxygen to 2 water molecules using 4 electrons from cytochrome c in the IMS and 4 protons from the mitochondrial matrix. This Branchiostoma lanceolatum (Common lancelet) protein is Cytochrome c oxidase subunit 2 (COII).